The chain runs to 26 residues: uncharacterized protein (26 aa).

It localises to the plastid. The protein localises to the chloroplast. This is an uncharacterized protein from Trieres chinensis (Marine centric diatom).